The chain runs to 182 residues: Urease accessory protein UreE (182 aa).

The tract at residues P128 to A182 is disordered. Positions L146–H162 are enriched in basic and acidic residues. Residues E173 to A182 show a composition bias toward acidic residues.

This sequence belongs to the UreE family.

It localises to the cytoplasm. In terms of biological role, involved in urease metallocenter assembly. Binds nickel. Probably functions as a nickel donor during metallocenter assembly. In Cereibacter sphaeroides (strain ATCC 17023 / DSM 158 / JCM 6121 / CCUG 31486 / LMG 2827 / NBRC 12203 / NCIMB 8253 / ATH 2.4.1.) (Rhodobacter sphaeroides), this protein is Urease accessory protein UreE.